The chain runs to 360 residues: Photosystem II protein D1 (360 aa).

3 helical membrane passes run 29–46 (YIGWFGVIMIPTLLTATT), 118–133 (HFLLGVFCYLGRQWEL), and 142–156 (WICVAYSAPVSAATA). Residue His118 coordinates chlorophyll a. A pheophytin a-binding site is contributed by Tyr126. [CaMn4O5] cluster is bound by residues Asp170 and Glu189. A helical transmembrane segment spans residues 197 to 218 (FHMLGVAGVFGGSLFSAMHGSL). His198 lines the chlorophyll a pocket. Residues His215 and 264 to 265 (SF) contribute to the a quinone site. His215 is a Fe cation binding site. His272 is a binding site for Fe cation. A helical transmembrane segment spans residues 274 to 288 (FLGAWPVIGIWFTAM). Positions 332, 333, 342, and 344 each coordinate [CaMn4O5] cluster. The propeptide occupies 345 to 360 (SGEQAPVALIAPAING).

Belongs to the reaction center PufL/M/PsbA/D family. As to quaternary structure, PSII is composed of 1 copy each of membrane proteins PsbA, PsbB, PsbC, PsbD, PsbE, PsbF, PsbH, PsbI, PsbJ, PsbK, PsbL, PsbM, PsbT, PsbX, PsbY, PsbZ, Psb30/Ycf12, peripheral proteins PsbO, CyanoQ (PsbQ), PsbU, PsbV and a large number of cofactors. It forms dimeric complexes. Requires The D1/D2 heterodimer binds P680, chlorophylls that are the primary electron donor of PSII, and subsequent electron acceptors. It shares a non-heme iron and each subunit binds pheophytin, quinone, additional chlorophylls, carotenoids and lipids. D1 provides most of the ligands for the Mn4-Ca-O5 cluster of the oxygen-evolving complex (OEC). There is also a Cl(-1) ion associated with D1 and D2, which is required for oxygen evolution. The PSII complex binds additional chlorophylls, carotenoids and specific lipids. as cofactor. In terms of processing, tyr-161 forms a radical intermediate that is referred to as redox-active TyrZ, YZ or Y-Z. Post-translationally, C-terminally processed by CtpA; processing is essential to allow assembly of the oxygen-evolving complex and thus photosynthetic growth.

It localises to the cellular thylakoid membrane. It catalyses the reaction 2 a plastoquinone + 4 hnu + 2 H2O = 2 a plastoquinol + O2. In terms of biological role, photosystem II (PSII) is a light-driven water:plastoquinone oxidoreductase that uses light energy to abstract electrons from H(2)O, generating O(2) and a proton gradient subsequently used for ATP formation. It consists of a core antenna complex that captures photons, and an electron transfer chain that converts photonic excitation into a charge separation. The D1/D2 (PsbA/PsbD) reaction center heterodimer binds P680, the primary electron donor of PSII as well as several subsequent electron acceptors. This Microcystis aeruginosa (strain NIES-843 / IAM M-2473) protein is Photosystem II protein D1.